A 222-amino-acid chain; its full sequence is Putative fungistatic metabolite (222 aa).

WSC domains lie at 16-110 and 127-222; these read AQTY…YGTS and TTQY…YQWV.

Its function is as follows. Inhibits the growth of the fungus P.tritici-repentis. This Chaetomium globosum (strain ATCC 6205 / CBS 148.51 / DSM 1962 / NBRC 6347 / NRRL 1970) (Soil fungus) protein is Putative fungistatic metabolite.